A 239-amino-acid chain; its full sequence is uncharacterized protein (239 aa).

It is found in the endoplasmic reticulum. Its subcellular location is the golgi apparatus. This is an uncharacterized protein from Schizosaccharomyces pombe (strain 972 / ATCC 24843) (Fission yeast).